The primary structure comprises 55 residues: Sec-independent protein translocase protein TatA (55 aa).

Residues 1–21 (MFGELGVPEVLFILGIALLIF) traverse the membrane as a helical segment.

It belongs to the TatA/E family. Forms a complex with TatC.

Its subcellular location is the cell inner membrane. Its function is as follows. Part of the twin-arginine translocation (Tat) system that transports large folded proteins containing a characteristic twin-arginine motif in their signal peptide across membranes. TatA could form the protein-conducting channel of the Tat system. This chain is Sec-independent protein translocase protein TatA, found in Koribacter versatilis (strain Ellin345).